A 596-amino-acid chain; its full sequence is Elongation factor 4 (596 aa).

Residues 2 to 184 (KHIRNFSIIA…VIVAQIPSPE (183 aa)) enclose the tr-type G domain. Residues 14–19 (DHGKST) and 131–134 (NKID) each bind GTP.

It belongs to the TRAFAC class translation factor GTPase superfamily. Classic translation factor GTPase family. LepA subfamily.

It is found in the cell inner membrane. It carries out the reaction GTP + H2O = GDP + phosphate + H(+). In terms of biological role, required for accurate and efficient protein synthesis under certain stress conditions. May act as a fidelity factor of the translation reaction, by catalyzing a one-codon backward translocation of tRNAs on improperly translocated ribosomes. Back-translocation proceeds from a post-translocation (POST) complex to a pre-translocation (PRE) complex, thus giving elongation factor G a second chance to translocate the tRNAs correctly. Binds to ribosomes in a GTP-dependent manner. The polypeptide is Elongation factor 4 (Shewanella sediminis (strain HAW-EB3)).